Consider the following 210-residue polypeptide: Putative protein-lysine deacylase ABHD14B (210 aa).

Position 91 is a phosphoserine (serine 91). Catalysis depends on charge relay system residues serine 111, aspartate 162, and histidine 188.

Belongs to the AB hydrolase superfamily. ABHD14 family. In terms of assembly, may interact with TAF1.

It is found in the cytoplasm. The protein localises to the nucleus. The enzyme catalyses L-lysyl-[protein] + acetyl-CoA = N(6)-acetyl-L-lysyl-[protein] + CoA + H(+). Functionally, acts as an atypical protein-lysine deacetylase in vitro. Catalyzes the deacetylation of lysine residues using CoA as substrate, generating acetyl-CoA and the free amine of protein-lysine residues. Additional experiments are however required to confirm the protein-lysine deacetylase activity in vivo. Has hydrolase activity towards various surrogate p-nitrophenyl (pNp) substrates, such as pNp-butyrate, pNp-acetate and pNp-octanoate in vitro, with a strong preference for pNp-acetate. May activate transcription. This is Putative protein-lysine deacylase ABHD14B from Rattus norvegicus (Rat).